The following is a 353-amino-acid chain: Membrane lipoprotein TmpC (353 aa).

The N-terminal stretch at 1 to 20 (MREKWVRAFAGVFCAMLLIG) is a signal peptide. Cys21 carries N-palmitoyl cysteine lipidation. Cys21 is lipidated: S-diacylglycerol cysteine. Position 47 (Asp47) interacts with guanosine. Asp47 lines the inosine pocket. Adenosine-binding positions include 47-48 (DS) and Phe56. Residues Asn57, Asp128, Phe206, Gly232, Asp258, and Lys280 each contribute to the guanosine site. Residues Asn57 and Asp128 each contribute to the inosine site. The adenosine site is built by Asp128, Phe206, Gly232, Asp258, and Lys280. Positions 232, 258, and 280 each coordinate inosine.

This sequence belongs to the BMP lipoprotein family. Monomer.

It is found in the cell membrane. Binds purine nucleosides and may play a role in purine nucleoside uptake. May be part of an ABC-type nucleoside uptake system. Has highest affinity for guanosine, followed by inosine and adenosine. Has very low affinity for cytidine and does not bind thymidine. The protein is Membrane lipoprotein TmpC (tmpC) of Treponema pallidum (strain Nichols).